The chain runs to 154 residues: Large ribosomal subunit protein uL22 (154 aa).

It belongs to the universal ribosomal protein uL22 family. As to quaternary structure, part of the 50S ribosomal subunit.

Its function is as follows. This protein binds specifically to 23S rRNA. It makes multiple contacts with different domains of the 23S rRNA in the assembled 50S subunit and ribosome. Functionally, the globular domain of the protein is located near the polypeptide exit tunnel on the outside of the subunit, while an extended beta-hairpin is found that lines the wall of the exit tunnel in the center of the 70S ribosome. This chain is Large ribosomal subunit protein uL22, found in Methanosphaera stadtmanae (strain ATCC 43021 / DSM 3091 / JCM 11832 / MCB-3).